The chain runs to 861 residues: FO synthase (861 aa).

Radical SAM core domains follow at residues 69–319 and 528–763; these read ITYS…LQAP and VTYI…LLHP. Residues 70–401 are cofG-like; the sequence is TYSKSVFIPL…PRLLPHVRAL (332 aa). [4Fe-4S] cluster-binding residues include Cys83, Cys87, Cys90, Cys542, Cys546, and Cys549. A cofH-like region spans residues 505–838; the sequence is DGPALDALTR…KPRTTLYGEV (334 aa).

This sequence in the N-terminal section; belongs to the radical SAM superfamily. CofG family. The protein in the C-terminal section; belongs to the radical SAM superfamily. CofH family. Requires [4Fe-4S] cluster as cofactor.

The catalysed reaction is 5-amino-6-(D-ribitylamino)uracil + L-tyrosine + S-adenosyl-L-methionine = 5-amino-5-(4-hydroxybenzyl)-6-(D-ribitylimino)-5,6-dihydrouracil + 2-iminoacetate + 5'-deoxyadenosine + L-methionine + H(+). It catalyses the reaction 5-amino-5-(4-hydroxybenzyl)-6-(D-ribitylimino)-5,6-dihydrouracil + S-adenosyl-L-methionine = 7,8-didemethyl-8-hydroxy-5-deazariboflavin + 5'-deoxyadenosine + L-methionine + NH4(+) + H(+). The protein operates within cofactor biosynthesis; coenzyme F0 biosynthesis. Catalyzes the radical-mediated synthesis of 7,8-didemethyl-8-hydroxy-5-deazariboflavin (FO) from 5-amino-6-(D-ribitylamino)uracil and L-tyrosine. The chain is FO synthase (fbiC) from Streptomyces avermitilis (strain ATCC 31267 / DSM 46492 / JCM 5070 / NBRC 14893 / NCIMB 12804 / NRRL 8165 / MA-4680).